A 205-amino-acid chain; its full sequence is Large ribosomal subunit protein uL3 (205 aa).

Belongs to the universal ribosomal protein uL3 family. As to quaternary structure, part of the 50S ribosomal subunit. Forms a cluster with proteins L14 and L19.

Functionally, one of the primary rRNA binding proteins, it binds directly near the 3'-end of the 23S rRNA, where it nucleates assembly of the 50S subunit. The protein is Large ribosomal subunit protein uL3 of Porphyromonas gingivalis (strain ATCC 33277 / DSM 20709 / CIP 103683 / JCM 12257 / NCTC 11834 / 2561).